Reading from the N-terminus, the 196-residue chain is Pyridoxal 5'-phosphate synthase subunit PdxT (196 aa).

An L-glutamine-binding site is contributed by 47–49 (GES). Cys79 serves as the catalytic Nucleophile. Residues Arg106 and 134–135 (IR) each bind L-glutamine. Residues His170 and Glu172 each act as charge relay system in the active site.

Belongs to the glutaminase PdxT/SNO family. In terms of assembly, in the presence of PdxS, forms a dodecamer of heterodimers. Only shows activity in the heterodimer.

It catalyses the reaction aldehydo-D-ribose 5-phosphate + D-glyceraldehyde 3-phosphate + L-glutamine = pyridoxal 5'-phosphate + L-glutamate + phosphate + 3 H2O + H(+). It carries out the reaction L-glutamine + H2O = L-glutamate + NH4(+). It functions in the pathway cofactor biosynthesis; pyridoxal 5'-phosphate biosynthesis. In terms of biological role, catalyzes the hydrolysis of glutamine to glutamate and ammonia as part of the biosynthesis of pyridoxal 5'-phosphate. The resulting ammonia molecule is channeled to the active site of PdxS. The polypeptide is Pyridoxal 5'-phosphate synthase subunit PdxT (Bacillus cereus (strain G9842)).